A 635-amino-acid chain; its full sequence is Threonine--tRNA ligase (635 aa).

Residues 1–61 (MINISLSDGS…ENNCKLRILT (61 aa)) enclose the TGS domain. A catalytic region spans residues 242–533 (DHRKLGRELD…LIEEYAGCFP (292 aa)). Positions 333, 384, and 510 each coordinate Zn(2+).

The protein belongs to the class-II aminoacyl-tRNA synthetase family. Homodimer. It depends on Zn(2+) as a cofactor.

It is found in the cytoplasm. It carries out the reaction tRNA(Thr) + L-threonine + ATP = L-threonyl-tRNA(Thr) + AMP + diphosphate + H(+). In terms of biological role, catalyzes the attachment of threonine to tRNA(Thr) in a two-step reaction: L-threonine is first activated by ATP to form Thr-AMP and then transferred to the acceptor end of tRNA(Thr). Also edits incorrectly charged L-seryl-tRNA(Thr). In Rickettsia canadensis (strain McKiel), this protein is Threonine--tRNA ligase.